The sequence spans 337 residues: Glucan endo-1,3-beta-glucosidase, basic isoform 1 (337 aa).

Glu-94 functions as the Proton donor in the catalytic mechanism. Glu-239 (nucleophile) is an active-site residue. Positions 315-337 (VSERVWDISAETNSTASSLISEM) are cleaved as a propeptide — removed in mature form. N-linked (GlcNAc...) asparagine glycosylation is present at Asn-327.

Belongs to the glycosyl hydrolase 17 family.

The protein resides in the vacuole. The enzyme catalyses Hydrolysis of (1-&gt;3)-beta-D-glucosidic linkages in (1-&gt;3)-beta-D-glucans.. Is thought to be an important plant defense-related product against fungal pathogens. This chain is Glucan endo-1,3-beta-glucosidase, basic isoform 1 (GLUB1), found in Solanum tuberosum (Potato).